Consider the following 209-residue polypeptide: Putative tripartite motif-containing protein 61 (209 aa).

The RING-type zinc finger occupies 16-57; it reads CPICLDYLKDPVTISCGHNFCLSCIIMSWKDLHDSFPCPFCH. The B box-type zinc-finger motif lies at 92–133; the sequence is EEKHVCKKHNQVLTFFCQKDLELLCPRCSLSTDHQHHCVWPI. C97, H100, C119, and H125 together coordinate Zn(2+).

This chain is Putative tripartite motif-containing protein 61 (TRIM61), found in Homo sapiens (Human).